A 241-amino-acid chain; its full sequence is Probable transcriptional regulatory protein CV_3123 (241 aa).

Belongs to the TACO1 family.

It is found in the cytoplasm. The protein is Probable transcriptional regulatory protein CV_3123 of Chromobacterium violaceum (strain ATCC 12472 / DSM 30191 / JCM 1249 / CCUG 213 / NBRC 12614 / NCIMB 9131 / NCTC 9757 / MK).